Reading from the N-terminus, the 115-residue chain is Anamorsin homolog 2 (115 aa).

Positions 30-115 are disordered; that stretch reads VKEATKGEDC…KVKLNLTDDI (86 aa). [2Fe-2S] cluster contacts are provided by C39, C46, C49, and C51. Residues 39–51 are fe-S binding site A; it reads CTTRRRACKNCTC. The [4Fe-4S] cluster site is built by C77, C80, C88, and C91. 2 consecutive short sequence motifs (cx2C motif) follow at residues 77–80 and 88–91; these read CGNC and CATC. A fe-S binding site B region spans residues 77–91; the sequence is CGNCAKGDAFRCATC.

The protein belongs to the anamorsin family. Monomer. The cofactor is [2Fe-2S] cluster. It depends on [4Fe-4S] cluster as a cofactor.

The protein resides in the cytoplasm. Its subcellular location is the mitochondrion intermembrane space. In terms of biological role, component of the cytosolic iron-sulfur (Fe-S) protein assembly (CIA) machinery. Required for the maturation of extramitochondrial Fe-S proteins. Part of an electron transfer chain functioning in an early step of cytosolic Fe-S biogenesis, facilitating the de novo assembly of a [4Fe-4S] cluster on the cytosolic Fe-S scaffold complex. Electrons are transferred from NADPH via a FAD- and FMN-containing diflavin oxidoreductase. Together with the diflavin oxidoreductase, also required for the assembly of the diferric tyrosyl radical cofactor of ribonucleotide reductase (RNR), probably by providing electrons for reduction during radical cofactor maturation in the catalytic small subunit. The protein is Anamorsin homolog 2 of Trypanosoma cruzi (strain CL Brener).